Reading from the N-terminus, the 140-residue chain is uncharacterized protein (140 aa).

A signal peptide spans 1–22 (MRLRWQTIVLLLLILGGASASA).

This is an uncharacterized protein from Archaeoglobus fulgidus (strain ATCC 49558 / DSM 4304 / JCM 9628 / NBRC 100126 / VC-16).